The following is a 338-amino-acid chain: Glycerol-3-phosphate dehydrogenase [NAD(P)+] (338 aa).

3 residues coordinate NADPH: Trp-14, Tyr-50, and Lys-110. Residues Lys-110, Gly-141, and Ser-143 each contribute to the sn-glycerol 3-phosphate site. Ala-145 contacts NADPH. Residues Lys-196, Asp-249, Ser-259, Arg-260, and Asn-261 each contribute to the sn-glycerol 3-phosphate site. The active-site Proton acceptor is Lys-196. Residue Arg-260 participates in NADPH binding. Glu-285 serves as a coordination point for NADPH.

Belongs to the NAD-dependent glycerol-3-phosphate dehydrogenase family.

The protein resides in the cytoplasm. The enzyme catalyses sn-glycerol 3-phosphate + NAD(+) = dihydroxyacetone phosphate + NADH + H(+). The catalysed reaction is sn-glycerol 3-phosphate + NADP(+) = dihydroxyacetone phosphate + NADPH + H(+). The protein operates within membrane lipid metabolism; glycerophospholipid metabolism. In terms of biological role, catalyzes the reduction of the glycolytic intermediate dihydroxyacetone phosphate (DHAP) to sn-glycerol 3-phosphate (G3P), the key precursor for phospholipid synthesis. The protein is Glycerol-3-phosphate dehydrogenase [NAD(P)+] of Malacoplasma penetrans (strain HF-2) (Mycoplasma penetrans).